The sequence spans 521 residues: Bifunctional dihydrofolate reductase-thymidylate synthase (521 aa).

Residues 22-232 enclose the DHFR domain; sequence AFSLVVAVDE…TKYYFEKLIP (211 aa). Position 26 (Val26) interacts with substrate. NADP(+)-binding positions include Ala28 and 34–40; that span reads GIGDGRS. Asp48 contributes to the substrate binding site. Residues 78–80 and 99–102 each bind NADP(+); these read RKT and LSST. The substrate site is built by Ile154, Tyr160, and Thr178. 155–162 is a binding site for NADP(+); sequence GGGSVYAE. Residues 237 to 521 are thymidylate synthase; the sequence is EEQYLSLVDR…YPPISMKMAV (285 aa). Arg257 is a binding site for dUMP. Cys403 is a catalytic residue. Residues His404, 422 to 426, Asn434, and 464 to 466 each bind dUMP; these read QRSCD and HVY.

This sequence in the N-terminal section; belongs to the dihydrofolate reductase family. In the C-terminal section; belongs to the thymidylate synthase family. In terms of assembly, homodimer.

The catalysed reaction is (6S)-5,6,7,8-tetrahydrofolate + NADP(+) = 7,8-dihydrofolate + NADPH + H(+). The enzyme catalyses dUMP + (6R)-5,10-methylene-5,6,7,8-tetrahydrofolate = 7,8-dihydrofolate + dTMP. Its pathway is cofactor biosynthesis; tetrahydrofolate biosynthesis; 5,6,7,8-tetrahydrofolate from 7,8-dihydrofolate: step 1/1. Bifunctional enzyme. Involved in de novo dTMP biosynthesis. Key enzyme in folate metabolism. Catalyzes an essential reaction for de novo glycine and purine synthesis, DNA precursor synthesis, and for the conversion of dUMP to dTMP. The sequence is that of Bifunctional dihydrofolate reductase-thymidylate synthase from Trypanosoma cruzi.